The following is a 360-amino-acid chain: Lipid-A-disaccharide synthase (360 aa).

This sequence belongs to the LpxB family.

The catalysed reaction is a lipid X + a UDP-2-N,3-O-bis[(3R)-3-hydroxyacyl]-alpha-D-glucosamine = a lipid A disaccharide + UDP + H(+). It functions in the pathway bacterial outer membrane biogenesis; LPS lipid A biosynthesis. Condensation of UDP-2,3-diacylglucosamine and 2,3-diacylglucosamine-1-phosphate to form lipid A disaccharide, a precursor of lipid A, a phosphorylated glycolipid that anchors the lipopolysaccharide to the outer membrane of the cell. The chain is Lipid-A-disaccharide synthase from Helicobacter pylori (strain Shi470).